A 293-amino-acid chain; its full sequence is Acetylglutamate kinase (293 aa).

Substrate-binding positions include 71–72 (GG), arginine 93, and asparagine 186.

It belongs to the acetylglutamate kinase family. ArgB subfamily.

The protein resides in the cytoplasm. The enzyme catalyses N-acetyl-L-glutamate + ATP = N-acetyl-L-glutamyl 5-phosphate + ADP. It functions in the pathway amino-acid biosynthesis; L-arginine biosynthesis; N(2)-acetyl-L-ornithine from L-glutamate: step 2/4. Its function is as follows. Catalyzes the ATP-dependent phosphorylation of N-acetyl-L-glutamate. The sequence is that of Acetylglutamate kinase from Synechococcus sp. (strain WH7803).